The chain runs to 1060 residues: Anoctamin-8 (1060 aa).

The segment at 1-32 (MAEAASGAGDVTLEGERGKRPPPEGEPAAPAS) is disordered. Ala2 carries the post-translational modification N-acetylalanine. Residues 2 to 244 (AEAASGAGDV…DDICDYFGVK (243 aa)) lie on the Cytoplasmic side of the membrane. Residues 14-23 (EGERGKRPPP) are compositionally biased toward basic and acidic residues. Residues 245–265 (IAMYFAWLGFYTSAMVYPAVF) traverse the membrane as a helical segment. The Extracellular segment spans residues 266–281 (GSVLYTFTEADQTSRD). Residues 282–302 (VSCVVFALFNVIWSTLFLEEW) form a helical membrane-spanning segment. The Cytoplasmic segment spans residues 303-356 (KRRGAELAYKWGTLDSPGEAVEEPRPQFRGIRRISPITRAEEFYYPPWKRLLFQ). The residue at position 318 (Ser318) is a Phosphoserine. The chain crosses the membrane as a helical span at residues 357–377 (LLVSLPLCLACLICVFILMLG). The Extracellular segment spans residues 378–400 (CFQLQELVLSVKGLPRLVRFLPK). A helical transmembrane segment spans residues 401 to 421 (VMLALLVSVSAEGYKKLAVWL). At 422 to 437 (NDMENYRLESTYERHL) the chain is on the cytoplasmic side. The helical transmembrane segment at 438–458 (IIKVVLFQFVNSYLSLFYIGF) threads the bilayer. Residues 459–745 (YLKDMDRLKE…YEDTFQDYQE (287 aa)) are Extracellular-facing. Disordered stretches follow at residues 529–605 (AQAD…SLLD), 619–640 (GAGR…SPTM), 653–672 (AEED…EPQT), and 680–723 (GEGR…HSPQ). The segment covering 534 to 547 (GGAGSRRCLGGGCG) has biased composition (gly residues). Composition is skewed to acidic residues over residues 549–559 (PEEENEEEEEA) and 581–602 (EEDE…EEGS). Position 665 is a phosphoserine (Ser665). A compositionally biased stretch (basic and acidic residues) spans 680-694 (GEGRDQGPDGDRDTE). N-linked (GlcNAc...) asparagine glycosylation occurs at Asn708. The helical transmembrane segment at 746–766 (MFVQFGYVVLFSSAFPLAALC) threads the bilayer. At 767–802 (ALVNNLIEIRSDAFKLCTGLQRPFGRRVESIGQWQK) the chain is on the cytoplasmic side. Residue Ser796 is modified to Phosphoserine. The chain crosses the membrane as a helical span at residues 803–823 (VMEAMGVLAIVVNCYLIGQCG). The Extracellular portion of the chain corresponds to 824–836 (QLQRLFPWLSPEA). The chain crosses the membrane as a helical span at residues 837-857 (AIVSVVVLEHLALLVKYLIHV). Topologically, residues 858 to 1060 (AIPDIPGWVA…PRPEDAGHRP (203 aa)) are cytoplasmic. The interval 884–1060 (HERQAQQRFQ…PRPEDAGHRP (177 aa)) is disordered. 2 stretches are compositionally biased toward basic and acidic residues: residues 899 to 927 (RREE…EARA) and 935 to 950 (VAER…ERPR). Residues 972–986 (TRPPAPTGCAPPPRS) show a composition bias toward pro residues. Arg991 is modified (asymmetric dimethylarginine; alternate). An Omega-N-methylarginine; alternate modification is found at Arg991. At Arg999 the chain carries Omega-N-methylarginine. The segment covering 1049–1060 (PEPRPEDAGHRP) has biased composition (basic and acidic residues).

Belongs to the anoctamin family. As to expression, predominant expression seen in epithelial tissues.

It is found in the cell membrane. In terms of biological role, does not exhibit calcium-activated chloride channel (CaCC) activity. The polypeptide is Anoctamin-8 (Ano8) (Mus musculus (Mouse)).